The primary structure comprises 172 residues: Adenine phosphoribosyltransferase (172 aa).

It belongs to the purine/pyrimidine phosphoribosyltransferase family. As to quaternary structure, homodimer.

It is found in the cytoplasm. The enzyme catalyses AMP + diphosphate = 5-phospho-alpha-D-ribose 1-diphosphate + adenine. The protein operates within purine metabolism; AMP biosynthesis via salvage pathway; AMP from adenine: step 1/1. In terms of biological role, catalyzes a salvage reaction resulting in the formation of AMP, that is energically less costly than de novo synthesis. The polypeptide is Adenine phosphoribosyltransferase (Hydrogenovibrio crunogenus (strain DSM 25203 / XCL-2) (Thiomicrospira crunogena)).